The chain runs to 180 residues: Bifunctional bis(5'-adenosyl)-triphosphatase/adenylylsulfatase FHIT (180 aa).

Residues 27–134 form the HIT domain; the sequence is SYAFGPYKID…LPRKGGDFEK (108 aa). Positions 52 and 108 each coordinate substrate. The Histidine triad motif motif lies at 119 to 123; the sequence is HVHIH. The active-site Tele-AMP-histidine intermediate is the histidine 121. Histidine 123 contributes to the substrate binding site.

It carries out the reaction P(1),P(3)-bis(5'-adenosyl) triphosphate + H2O = AMP + ADP + 2 H(+). The enzyme catalyses adenosine 5'-phosphosulfate + H2O = sulfate + AMP + 2 H(+). It catalyses the reaction adenosine 5'-phosphosulfate + NH4(+) = adenosine 5'-phosphoramidate + sulfate + 2 H(+). The catalysed reaction is adenosine 5'-phosphoramidate + H2O = AMP + NH4(+). Possesses dinucleoside triphosphate hydrolase activity. Cleaves P(1)-P(3)-bis(5'-adenosyl) triphosphate (Ap3A) to yield AMP and ADP. Exhibits adenylylsulfatase activity, hydrolyzing adenosine 5'-phosphosulfate to yield AMP and sulfate. Exhibits adenosine 5'-monophosphoramidase activity, hydrolyzing purine nucleotide phosphoramidates with a single phosphate group such as adenosine 5'monophosphoramidate (AMP-NH2) to yield AMP and NH2. Exhibits adenylylsulfate-ammonia adenylyltransferase, catalyzing the ammonolysis of adenosine 5'-phosphosulfate resulting in the formation of adenosine 5'-phosphoramidate. This is Bifunctional bis(5'-adenosyl)-triphosphatase/adenylylsulfatase FHIT from Arabidopsis thaliana (Mouse-ear cress).